The following is a 65-amino-acid chain: Prokaryotic ubiquitin-like protein Pup (65 aa).

The span at 1–14 (MSGHEQQRPSRREE) shows a compositional bias: basic and acidic residues. The disordered stretch occupies residues 1 to 35 (MSGHEQQRPSRREEDVEETPVVPAQAGAQAKESDA). Residues 21 to 59 (VVPAQAGAQAKESDADVDALLDEIDEVLESNSEEFVRGF) are ARC ATPase binding. Residues 26 to 49 (AGAQAKESDADVDALLDEIDEVLE) are a coiled coil. A Deamidated glutamine modification is found at Gln65. Gln65 participates in a covalent cross-link: Isoglutamyl lysine isopeptide (Gln-Lys) (interchain with K-? in acceptor proteins).

The protein belongs to the prokaryotic ubiquitin-like protein family. As to quaternary structure, strongly interacts with the proteasome-associated ATPase ARC through a hydrophobic interface; the interacting region of Pup lies in its C-terminal half. There is one Pup binding site per ARC hexamer ring. In terms of processing, is modified by deamidation of its C-terminal glutamine to glutamate by the deamidase Dop, a prerequisite to the subsequent pupylation process.

The protein operates within protein degradation; proteasomal Pup-dependent pathway. Its function is as follows. Protein modifier that is covalently attached to lysine residues of substrate proteins, thereby targeting them for proteasomal degradation. The tagging system is termed pupylation. The protein is Prokaryotic ubiquitin-like protein Pup of Kineococcus radiotolerans (strain ATCC BAA-149 / DSM 14245 / SRS30216).